An 824-amino-acid polypeptide reads, in one-letter code: MMQNVHLAPETDEDDLYSGYNDYNPIYDIEELENDAAFQQAVRTSHGRRPPITAKISSTAVTRPIATGYGSKTSLASSIGRPMTGAIQDGVTRPMTAVRAAGFTKAALRGSAFDPLSQSRGPASPLEAKKKDSPEEKIKQLEKEVNELVEESCIANSCGDLKLALEKAKDAGRKERVLVRQREQVTTPENINLDLTYSVLFNLASQYSVNEMYAEALNTYQVIVKNKMFSNAGILKMNMGNIYLKQRNYSKAIKFYRMALDQVPSVNKQMRIKIMQNIGVTFIQAGQYSDAINSYEHIMSMAPNLKAGYNLTICYFAIGDREKMKKAFQKLITVPLEIDEDKYISPSDDPHTNLVTEAIKNDHLRQMERERKAMAEKYIMTSAKLIAPVIETSFAAGYDWCVEVVKASQYVELANDLEINKAVTYLRQKDYNQAVEILKVLEKKDSRVKSAAATNLSALYYMGKDFAQASSYADIAVNSDRYNPAALTNKGNTVFANGDYEKAAEFYKEALRNDSSCTEALYNIGLTYEKLNRLDEALDCFLKLHAILRNSAEVLYQIANIYELMENPSQAIEWLMQVVSVIPTDPQVLSKLGELYDREGDKSQAFQYYYESYRYFPCNIEVIEWLGAYYIDTQFWEKAIQYFERASLIQPTQVKWQLMVASCFRRSGNYQKALDTYKDTHRKFPENVECLRFLVRLCTDLGLKDAQEYARKLKRLEKMKEIREQRIKSGRDGSGGSRGKREGSASGDSGQNYSASSKGERLSARLRALPGTNEPYESSSNKEIDASYVDPLGPQIERPKTAAKKRIDEDDFADEELGDDLLPE.

The interval 113 to 134 (FDPLSQSRGPASPLEAKKKDSP) is disordered. 12 TPR repeats span residues 197-230 (YSVL…KMFS), 233-266 (GILK…VPSV), 272-305 (IKIM…APNL), 307-338 (AGYN…PLEI), 415-448 (NDLE…DSRV), 450-483 (SAAA…DRYN), 484-517 (PAAL…DSSC), 518-551 (TEAL…LRNS), 552-585 (AEVL…IPTD), 586-619 (PQVL…FPCN), 620-653 (IEVI…QPTQ), and 654-687 (VKWQ…FPEN). Positions 724–824 (EQRIKSGRDG…EELGDDLLPE (101 aa)) are disordered. Residues 748-757 (DSGQNYSASS) are compositionally biased toward polar residues. Basic and acidic residues predominate over residues 797–808 (ERPKTAAKKRID). A compositionally biased stretch (acidic residues) spans 809–824 (EDDFADEELGDDLLPE).

As to quaternary structure, component of the IFT complex B, at least composed of IFT20, IFT22, IFT25, IFT27, IFT46, IFT52, TRAF3IP1/IFT54, IFT57, IFT74, IFT80, IFT81, and IFT88. Interacts with IFT20, IFT22, IFT25, IFT27, IFT52, TRAF3IP1, IFT74, IFT80 and IFT81. Interacts with IFT172. Interacts with IFT57. Interacts with IFT46. Interacts with IFT70B. Interacts with C2CD3. Interacts with ENTR1 (via N-terminus). Interacts with LRRC56. Interacts with DZIP1. Interacts with CCDC38. Interacts with CCDC146. Interacts with CFAP53. Expressed in the heart, brain, liver, lung, kidney, skeletal muscle and pancreas.

The protein localises to the cytoplasm. It is found in the cytoskeleton. It localises to the microtubule organizing center. Its subcellular location is the centrosome. The protein resides in the centriole. The protein localises to the cell projection. It is found in the cilium. It localises to the cilium basal body. Its subcellular location is the flagellum. Its function is as follows. Positively regulates primary cilium biogenesis. Also involved in autophagy since it is required for trafficking of ATG16L and the expansion of the autophagic compartment. The protein is Intraflagellar transport protein 88 homolog (IFT88) of Homo sapiens (Human).